Reading from the N-terminus, the 445-residue chain is Cyclic GMP-AMP phosphodiesterase SMPDL3A (445 aa).

Positions Met-1–Gly-22 are cleaved as a signal peptide. Residues Asp-42 and His-44 each coordinate Zn(2+). The cysteines at positions 59 and 78 are disulfide-linked. A glycan (N-linked (GlcNAc...) asparagine) is linked at Asn-66. Asp-107 lines the Zn(2+) pocket. His-111 is a binding site for ATP. N-linked (GlcNAc...) asparagine glycosylation occurs at Asn-128. Asn-148 contacts Zn(2+). ATP-binding residues include Asn-148 and His-149. N-linked (GlcNAc...) asparagine glycosylation is found at Asn-219 and Asn-235. Positions 249, 290, and 292 each coordinate Zn(2+). Asn-353 and Asn-364 each carry an N-linked (GlcNAc...) asparagine glycan. 2 disulfide bridges follow: Cys-417/Cys-421 and Cys-427/Cys-440.

This sequence belongs to the acid sphingomyelinase family. As to quaternary structure, monomer. Homodimer; homodimerizes following 2',3'-cGAMP-binding. Zn(2+) is required as a cofactor.

It is found in the secreted. The catalysed reaction is 2',3'-cGAMP + H2O = 5'-pGpA(2'-5') + H(+). The enzyme catalyses 5'-pGpA(2'-5') + H2O = 5'-GpA(2'-5') + phosphate. It carries out the reaction a ribonucleoside 5'-triphosphate + H2O = a ribonucleoside 5'-diphosphate + phosphate + H(+). It catalyses the reaction ATP + H2O = ADP + phosphate + H(+). Its function is as follows. Cyclic-nucleotide phosphodiesterase that acts as a negative regulator of innate immunity by mediating degradation of 2',3'-cGAMP, thereby inhibiting the cGAS-STING signaling. Specifically linearizes 2',3'-cGAMP into 2'5'-bond pGpA and further hydrolyzes pGpA to produce GpA. Also has in vitro nucleotide phosphodiesterase activity with nucleoside triphosphates, such as ATP. Has in vitro activity with p-nitrophenyl-TMP. Has lower activity with nucleoside diphosphates, and no activity with nucleoside monophosphates. Has in vitro activity with CDP-choline, giving rise to CMP and phosphocholine. Has in vitro activity with CDP-ethanolamine. Does not have sphingomyelin phosphodiesterase activity. This chain is Cyclic GMP-AMP phosphodiesterase SMPDL3A (Smpdl3a), found in Rattus norvegicus (Rat).